The sequence spans 313 residues: MQEKQVVNQKEQYDLNKLQKRLRRNVGQAIADFNMIEEGDRVMVCLSGGKDSYTMLDILQNLQKSAPINFTLIAVNLDQKQPGFPEDILPAYLDKQGVEYKIVEENTYGIVKEIIPEGKTTCSLCSRLRRGILYRTATELGATKIALGHHRDDILQTLFLNMFYGGKLKGMPPKLMSDDGKHVVIRPLAYCREKDIERFAIAREYPIIPCNLCGSQPNLQRQVIKDMLRDWDKQYPGRIETMFSAMQNVVPSHLNDHKLFDFKNITHNSEIVDGGDLAFDREELPLQPVSWQPEDAEDGDTQPLVRLDVLEIK.

The PP-loop motif signature appears at 47 to 52; it reads SGGKDS. Residues cysteine 122, cysteine 125, and cysteine 213 each coordinate [4Fe-4S] cluster.

This sequence belongs to the TtcA family. As to quaternary structure, homodimer. It depends on Mg(2+) as a cofactor. [4Fe-4S] cluster serves as cofactor.

The protein resides in the cytoplasm. It carries out the reaction cytidine(32) in tRNA + S-sulfanyl-L-cysteinyl-[cysteine desulfurase] + AH2 + ATP = 2-thiocytidine(32) in tRNA + L-cysteinyl-[cysteine desulfurase] + A + AMP + diphosphate + H(+). The protein operates within tRNA modification. Its function is as follows. Catalyzes the ATP-dependent 2-thiolation of cytidine in position 32 of tRNA, to form 2-thiocytidine (s(2)C32). The sulfur atoms are provided by the cysteine/cysteine desulfurase (IscS) system. The sequence is that of tRNA-cytidine(32) 2-sulfurtransferase from Yersinia enterocolitica serotype O:8 / biotype 1B (strain NCTC 13174 / 8081).